A 212-amino-acid polypeptide reads, in one-letter code: Cytidylate kinase (212 aa).

ATP is bound at residue 11–19 (GPAASGKGT). The disordered stretch occupies residues 50-69 (GGDPADPAASEEQARSLSRL).

The protein belongs to the cytidylate kinase family. Type 1 subfamily.

It localises to the cytoplasm. It carries out the reaction CMP + ATP = CDP + ADP. It catalyses the reaction dCMP + ATP = dCDP + ADP. The chain is Cytidylate kinase from Acidiphilium cryptum (strain JF-5).